Reading from the N-terminus, the 965-residue chain is Klaroid protein (965 aa).

The segment at Met-1–Phe-20 is disordered. A run of 2 helical transmembrane segments spans residues Thr-303 to Leu-323 and Phe-343 to Gln-363. Residues Ser-585 to Glu-612 are a coiled coil. In terms of domain architecture, SUN spans Gly-801–Pro-963.

Core component of the LINC complex which is composed of inner nuclear membrane SUN domain-containing proteins coupled to outer nuclear membrane KASH domain-containing nesprins. Expressed in all cells in the eye disk.

The protein resides in the membrane. It is found in the cytoplasm. The protein localises to the cytoskeleton. Its subcellular location is the microtubule organizing center. It localises to the perinuclear region. In terms of biological role, component of the LINC (LInker of Nucleoskeleton and Cytoskeleton) complex involved in the connection between the nuclear lamina and the cytoskeleton. Is required to nuclear migration in eye and to anchor klar in the nuclear membrane. The protein is Klaroid protein of Drosophila melanogaster (Fruit fly).